The following is a 699-amino-acid chain: Glycine--tRNA ligase beta subunit (699 aa).

Belongs to the class-II aminoacyl-tRNA synthetase family. Tetramer of two alpha and two beta subunits.

The protein resides in the cytoplasm. The enzyme catalyses tRNA(Gly) + glycine + ATP = glycyl-tRNA(Gly) + AMP + diphosphate. In Bradyrhizobium diazoefficiens (strain JCM 10833 / BCRC 13528 / IAM 13628 / NBRC 14792 / USDA 110), this protein is Glycine--tRNA ligase beta subunit.